The primary structure comprises 390 residues: Flagellar P-ring protein (390 aa).

Residues 1 to 25 form the signal peptide; that stretch reads MLLKKIFLTGIIVLDLVFFVSYGFA.

Belongs to the FlgI family. In terms of assembly, the basal body constitutes a major portion of the flagellar organelle and consists of four rings (L,P,S, and M) mounted on a central rod.

The protein localises to the periplasm. It localises to the bacterial flagellum basal body. Its function is as follows. Assembles around the rod to form the L-ring and probably protects the motor/basal body from shearing forces during rotation. This Syntrophus aciditrophicus (strain SB) protein is Flagellar P-ring protein.